The sequence spans 749 residues: 5-methyltetrahydropteroyltriglutamate--homocysteine methyltransferase (749 aa).

Residues 15–18 (RELK) and lysine 114 each bind 5-methyltetrahydropteroyltri-L-glutamate. Residues 425-427 (IGS) and glutamate 478 contribute to the L-homocysteine site. L-methionine-binding positions include 425-427 (IGS) and glutamate 478. Residue tryptophan 555 coordinates 5-methyltetrahydropteroyltri-L-glutamate. An L-homocysteine-binding site is contributed by aspartate 593. Aspartate 593 contributes to the L-methionine binding site. Glutamate 599 contributes to the 5-methyltetrahydropteroyltri-L-glutamate binding site. Zn(2+)-binding residues include histidine 636, cysteine 638, and glutamate 660. Residue histidine 689 is the Proton donor of the active site. Position 721 (cysteine 721) interacts with Zn(2+).

This sequence belongs to the vitamin-B12 independent methionine synthase family. Zn(2+) serves as cofactor.

The enzyme catalyses 5-methyltetrahydropteroyltri-L-glutamate + L-homocysteine = tetrahydropteroyltri-L-glutamate + L-methionine. It functions in the pathway amino-acid biosynthesis; L-methionine biosynthesis via de novo pathway; L-methionine from L-homocysteine (MetE route): step 1/1. In terms of biological role, catalyzes the transfer of a methyl group from 5-methyltetrahydrofolate to homocysteine resulting in methionine formation. In Streptococcus suis (strain 05ZYH33), this protein is 5-methyltetrahydropteroyltriglutamate--homocysteine methyltransferase.